The following is a 130-amino-acid chain: Fluoride-specific ion channel FluC (130 aa).

The next 4 helical transmembrane spans lie at 3–23, 39–59, 67–87, and 102–122; these read FIFLWAALGGAIGSSLRYFVG, GTFSVNVIGCFVIGFMGHLAV, FGIFFVTGVLGGFTTFSSYGL, and VSYALGTNILGLIGVAIGWFL. The Na(+) site is built by Gly-77 and Thr-80.

Belongs to the fluoride channel Fluc/FEX (TC 1.A.43) family.

The protein localises to the cell inner membrane. It carries out the reaction fluoride(in) = fluoride(out). Its activity is regulated as follows. Na(+) is not transported, but it plays an essential structural role and its presence is essential for fluoride channel function. Functionally, fluoride-specific ion channel. Important for reducing fluoride concentration in the cell, thus reducing its toxicity. The sequence is that of Fluoride-specific ion channel FluC from Helicobacter pylori (strain Shi470).